A 147-amino-acid chain; its full sequence is 3-dehydroquinate dehydratase (147 aa).

The active-site Proton acceptor is the Tyr23. The substrate site is built by Asn75, His81, and Asp88. His101 functions as the Proton donor in the catalytic mechanism. Substrate contacts are provided by residues 102-103 (LS) and Arg112.

The protein belongs to the type-II 3-dehydroquinase family. Homododecamer.

The enzyme catalyses 3-dehydroquinate = 3-dehydroshikimate + H2O. It functions in the pathway metabolic intermediate biosynthesis; chorismate biosynthesis; chorismate from D-erythrose 4-phosphate and phosphoenolpyruvate: step 3/7. In terms of biological role, catalyzes a trans-dehydration via an enolate intermediate. In Stenotrophomonas maltophilia (strain K279a), this protein is 3-dehydroquinate dehydratase.